Reading from the N-terminus, the 187-residue chain is LSM complex subunit LSM4 (187 aa).

Residues 2–85 (LPLYLLTNAK…IKFIKLQDNI (84 aa)) form the Sm domain. The segment at 93-187 (INSNNNSNSN…NSSSPQKVEF (95 aa)) is disordered. Low complexity predominate over residues 112 to 167 (NRDSNNNRGNYNRRNNNNGNSNRRPYSQNRQYNNSNSSNINNSINSINSNNQNMNN). Arg119 carries the post-translational modification Omega-N-methylarginine. A compositionally biased stretch (polar residues) spans 175 to 187 (HHFNSSSPQKVEF). A Phosphoserine modification is found at Ser181.

This sequence belongs to the snRNP Sm proteins family. In terms of assembly, component of the heptameric LSM1-LSM7 complex that forms a seven-membered ring structure with a donut shape. The LSm subunits are arranged in the order LSM1, LSM2, LSM3, LSM6, LSM5, LSM7 and LSM4. Except for LSM1, where a C-terminal helix crosses the ring structure to form additional interactions with LSM3 and LSM6, each subunit interacts only with its two neighboring subunits. The LSM1-LSM7 complex interacts with PAT1; within the complex PAT1 has direct interactions with LSM2 and LSM3. The LSM1-LSM7 complex interacts with XRN1. Component of the heptameric LSM2-LSM8 complex that forms a seven-membered ring structure with a donut shape; an RNA strand can pass through the hole in the center of the ring structure. The LSm subunits are arranged in the order LSM8, LSM2, LSM3, LSM6, LSM5, LSM7 and LSM4. Component of the spliceosome U4/U6-U5 tri-snRNP complex composed of the U4, U6 and U5 snRNAs and at least PRP3, PRP4, PRP6, PRP8, PRP18, PRP31, PRP38, SNU13, SNU23, SNU66, SNU114, SPP381, SMB1, SMD1, SMD2, SMD3, SMX2, SMX3, LSM2, LSM3, LSM4, LSM5, LSM6, LSM7, LSM8, BRR2 and DIB1. May be found in a complex comprising LSM2-LSM7 without LSM1 or LSM8; the complex associates with pre-P RNA and snoRNA SNR5.

The protein resides in the nucleus. It localises to the cytoplasm. In terms of biological role, component of LSm protein complexes, which are involved in RNA processing and may function in a chaperone-like manner. Component of the cytoplasmic LSM1-LSM7 complex which is involved in mRNA degradation by activating the decapping step. Together with PAT1, the LSM1-LSM7 complex binds to osmotic stress-activated mRNAs to attenuate the osmotic stress response, probably by limiting ribosome access to the mRNA and consequently translation. Component of the nuclear LSM2-LSM8 complex, which is involved in spliceosome assembly. The LSM2-LSM8 complex plays a role in the biogenesis of the spliceosomal U4/U6-U5 tri-snRNP complex by accelerating PRP24-mediated annealing of U4/U6 di-snRNA. The LSM2-LSM8 complex binds U6 snRNA terminating with a non-cyclic 3' phosphate group. LSM2-LSM8 is probably also involved in degradation of nuclear pre-mRNA by targeting them for decapping. LSM2-LSM8 could be involved in processing of pre-tRNAs, pre-rRNAs and U3 snoRNA, although involvement may be indirect. In a complex that probably contains LSM2-LSM7, but not LSM1 or LSM8, associates with the precursor of the RNA component of RNase P (pre-P RNA) and may be involved in maturing pre-P RNA; the complex also associates with snoRNA SNR5. The chain is LSM complex subunit LSM4 from Saccharomyces cerevisiae (strain ATCC 204508 / S288c) (Baker's yeast).